The following is a 410-amino-acid chain: DNA primase small subunit (410 aa).

Active-site residues include Glu-43, Asp-106, and Asp-108. Positions 118–129 match the Zinc knuckle motif motif; sequence CCKDATVCPKCW.

It belongs to the eukaryotic-type primase small subunit family. Heterodimer of a small subunit and a large subunit.

Its function is as follows. DNA primase is the polymerase that synthesizes small RNA primers for the Okazaki fragments made during discontinuous DNA replication. This Caenorhabditis elegans protein is DNA primase small subunit (pri-1).